A 152-amino-acid polypeptide reads, in one-letter code: D-aminoacyl-tRNA deacylase (152 aa).

The Gly-cisPro motif, important for rejection of L-amino acids signature appears at 142–143 (GP).

Belongs to the DTD family. Homodimer.

The protein localises to the cytoplasm. It catalyses the reaction glycyl-tRNA(Ala) + H2O = tRNA(Ala) + glycine + H(+). The catalysed reaction is a D-aminoacyl-tRNA + H2O = a tRNA + a D-alpha-amino acid + H(+). Its function is as follows. An aminoacyl-tRNA editing enzyme that deacylates mischarged D-aminoacyl-tRNAs. Also deacylates mischarged glycyl-tRNA(Ala), protecting cells against glycine mischarging by AlaRS. Acts via tRNA-based rather than protein-based catalysis; rejects L-amino acids rather than detecting D-amino acids in the active site. By recycling D-aminoacyl-tRNA to D-amino acids and free tRNA molecules, this enzyme counteracts the toxicity associated with the formation of D-aminoacyl-tRNA entities in vivo and helps enforce protein L-homochirality. This Burkholderia ambifaria (strain ATCC BAA-244 / DSM 16087 / CCUG 44356 / LMG 19182 / AMMD) (Burkholderia cepacia (strain AMMD)) protein is D-aminoacyl-tRNA deacylase.